A 219-amino-acid polypeptide reads, in one-letter code: Proteasome subunit beta type-9 (219 aa).

The propeptide at 1 to 20 (MLRAGAPTAGSFRTEEVHTG) is removed in mature form. The active-site Nucleophile is the Thr21. N6-acetyllysine is present on residues Lys53 and Lys109.

Belongs to the peptidase T1B family. In terms of assembly, the 26S proteasome consists of a 20S proteasome core and two 19S regulatory subunits. The 20S proteasome core is composed of 28 subunits that are arranged in four stacked rings, resulting in a barrel-shaped structure. The two end rings are each formed by seven alpha subunits, and the two central rings are each formed by seven beta subunits. The catalytic chamber with the active sites is on the inside of the barrel. Component of the immunoproteasome, where it displaces the equivalent housekeeping subunit PSMB6. Component of the spermatoproteasome, a form of the proteasome specifically found in testis. In terms of processing, autocleaved. The resulting N-terminal Thr residue of the mature subunit is responsible for the nucleophile proteolytic activity.

Its subcellular location is the cytoplasm. The protein resides in the nucleus. The catalysed reaction is Cleavage of peptide bonds with very broad specificity.. The proteasome is a multicatalytic proteinase complex which is characterized by its ability to cleave peptides with Arg, Phe, Tyr, Leu, and Glu adjacent to the leaving group at neutral or slightly basic pH. The proteasome has an ATP-dependent proteolytic activity. This subunit is involved in antigen processing to generate class I binding peptides. In Mus musculus bactrianus (Southwestern Asian house mouse), this protein is Proteasome subunit beta type-9 (Psmb9).